The sequence spans 147 residues: Myoglobin (147 aa).

The Globin domain maps to 2–141 (ADFDMVLKCW…IITDMEADYK (140 aa)). Position 60 (His-60) interacts with nitrite. His-60 contributes to the O2 binding site. His-89 serves as a coordination point for heme b.

The protein belongs to the globin family. In terms of assembly, monomeric.

The protein localises to the cytoplasm. The protein resides in the sarcoplasm. The enzyme catalyses Fe(III)-heme b-[protein] + nitric oxide + H2O = Fe(II)-heme b-[protein] + nitrite + 2 H(+). The catalysed reaction is H2O2 + AH2 = A + 2 H2O. Functionally, monomeric heme protein which primary function is to store oxygen and facilitate its diffusion within muscle tissues. Reversibly binds oxygen through a pentacoordinated heme iron and enables its timely and efficient release as needed during periods of heightened demand. Depending on the oxidative conditions of tissues and cells, and in addition to its ability to bind oxygen, it also has a nitrite reductase activity whereby it regulates the production of bioactive nitric oxide. Under stress conditions, like hypoxia and anoxia, it also protects cells against reactive oxygen species thanks to its pseudoperoxidase activity. The chain is Myoglobin (mb) from Channichthys rhinoceratus (Unicorn icefish).